The chain runs to 1296 residues: Probable serine/threonine protein kinase IREH1 (1296 aa).

Disordered regions lie at residues 1–274, 457–480, and 524–553; these read MVFK…SESP, SGAGRSYSAAKVPSTKKAYSQEQH, and SPALKTVKEAPASEEQNDSKVEPPNIVGSR. A compositionally biased stretch (low complexity) spans 10 to 32; it reads SSKKSGSSSPDSSNSPRSVGSNS. At S32 the chain carries Phosphoserine. 3 stretches are compositionally biased toward basic and acidic residues: residues 68-77, 101-112, and 178-208; these read DGLKKKDGSS, EVKKPPPPEVKE, and RKKEAGSSKLGLEENMDRTRPSDNKSDRDSL. Residues 214–249 are compositionally biased toward low complexity; it reads PPRSLSPTLPPSGSRLQNVASSSGTGRSEMSSGRSG. The segment at 602–621 adopts a C2H2-type; atypical zinc-finger fold; the sequence is CRICEEEVPTTHVEDHSRVC. Residues 724 to 750 are disordered; that stretch reads FGPKSDQGMTTSSASSMTPRSPIPTPR. Residues 730-740 show a composition bias toward polar residues; that stretch reads QGMTTSSASSM. In terms of domain architecture, Protein kinase spans 882–1171; it reads FEIIKPISRG…AAEVKQHIFF (290 aa). ATP is bound by residues 888–896 and K911; that span reads ISRGAFGRV. Residue D1005 is the Proton acceptor of the active site. S1070 is subject to Phosphoserine. Positions 1172-1277 constitute an AGC-kinase C-terminal domain; it reads KDINWDTLAR…KNLSQLASIN (106 aa). Residues 1214-1245 are disordered; that stretch reads PSGEVPDYSDADSMTNSSGCSSNHHEEGEAEE. The segment covering 1225–1235 has biased composition (polar residues); it reads DSMTNSSGCSS. Positions 1236-1245 are enriched in basic and acidic residues; the sequence is NHHEEGEAEE.

The protein belongs to the protein kinase superfamily. AGC Ser/Thr protein kinase family.

It carries out the reaction L-seryl-[protein] + ATP = O-phospho-L-seryl-[protein] + ADP + H(+). It catalyses the reaction L-threonyl-[protein] + ATP = O-phospho-L-threonyl-[protein] + ADP + H(+). Its function is as follows. May be involved in root hair elongation. This chain is Probable serine/threonine protein kinase IREH1, found in Arabidopsis thaliana (Mouse-ear cress).